Consider the following 501-residue polypeptide: MLTPRVLRALGWTGLFFLLLSPSNVLGASLSRDLETPPFLSFDPSNISINGAPLTEVPHAPSTESVSTNSESTNEHTITETTGKNAYIHNNASTDKQNANDTHKTPNILCDTEEVFVFLNETGRFVCTLKVDPPSDSEWSNFVLDLIFNPIEYHANEKNVEAARIAGLYGVPGSDYAYPRQSELISSIRRDPQGTFWTSPSPHGNKYFIWINKTTNTMGVEIRNVDYADNGYMQVIMRDHFNRPLIDKHIYIRVCQRPASVDVLAPPVLSGENYKASCIVRHFYPPGSVYVSWRQNGNIATPRKDRDGSFWWFESGRGATLVSTITLGNSGIDFPPKISCLVAWKQGDMISTTNATAIPTVYHHPRLSLAFKDGYAICTIECVPSEITVRWLVHDEAQPNTTYNTVVTGLCRTIDRHRNLLSRIPVWDNWTKTKYTCRLIGYPFDEDKFQDSEYYDATPAARGTPMVITVTAVLGLAVILGMGIIMTALCLYNSTRKNIRL.

The first 27 residues, 1–27, serve as a signal peptide directing secretion; that stretch reads MLTPRVLRALGWTGLFFLLLSPSNVLG. Residues 28-465 are Virion surface-facing; that stretch reads ASLSRDLETP…DATPAARGTP (438 aa). The N-linked (GlcNAc...) asparagine; by host glycan is linked to Asn-46. The tract at residues 53–86 is disordered; that stretch reads PLTEVPHAPSTESVSTNSESTNEHTITETTGKNA. A compositionally biased stretch (low complexity) spans 62–72; that stretch reads STESVSTNSES. N-linked (GlcNAc...) asparagine; by host glycans are attached at residues Asn-91, Asn-100, Asn-120, Asn-212, Asn-354, Asn-400, and Asn-429. In terms of domain architecture, Ig-like spans 258–356; that stretch reads PASVDVLAPP…GDMISTTNAT (99 aa). Residues 466-492 form a helical membrane-spanning segment; the sequence is MVITVTAVLGLAVILGMGIIMTALCLY. Over 493–501 the chain is Cytoplasmic; sequence NSTRKNIRL.

This sequence belongs to the herpesviridae glycoprotein C family.

It is found in the secreted. It localises to the host cell membrane. May play an immunoevasive role in the pathogenesis of Marek's disease. It is a candidate for causing the early-stage immunosuppression that occurs after MDHV infection. In Gallus gallus (Chicken), this protein is Envelope glycoprotein C homolog (gC).